Consider the following 179-residue polypeptide: UPF0227 protein Shewana3_2292 (179 aa).

Belongs to the UPF0227 family.

The polypeptide is UPF0227 protein Shewana3_2292 (Shewanella sp. (strain ANA-3)).